The chain runs to 201 residues: MAVFVANESGASDVDEVRLAALARFVLDAMKVNPLAELSVMLVEPKAMTDLHVRYMGEEGPTDVLSFPQDDAFDASWSESVDDDPTTLLGDVVLCPDVARRQAEQAGHSFDRELSLLCTHGILHLLGYDHAEPDEEREMWKVQSQLLASWDGADGADGADGARGAADGAADGGEGRRGDQGRRGDQGRGGGAGEPPAAPAR.

Residues His120, His124, and His130 each coordinate Zn(2+). Residues 151-201 are disordered; it reads DGADGADGADGARGAADGAADGGEGRRGDQGRRGDQGRGGGAGEPPAAPAR. The segment covering 173-186 has biased composition (basic and acidic residues); it reads GEGRRGDQGRRGDQ.

Belongs to the endoribonuclease YbeY family. Zn(2+) is required as a cofactor.

The protein localises to the cytoplasm. In terms of biological role, single strand-specific metallo-endoribonuclease involved in late-stage 70S ribosome quality control and in maturation of the 3' terminus of the 16S rRNA. The protein is Endoribonuclease YbeY of Frankia casuarinae (strain DSM 45818 / CECT 9043 / HFP020203 / CcI3).